Consider the following 296-residue polypeptide: NAD kinase (296 aa).

The active-site Proton acceptor is aspartate 72. Residues 72–73, 146–147, arginine 157, lysine 174, aspartate 176, 187–192, and glutamine 247 each bind NAD(+); these read DG, ND, and TAYALS.

The protein belongs to the NAD kinase family. A divalent metal cation serves as cofactor.

The protein localises to the cytoplasm. The catalysed reaction is NAD(+) + ATP = ADP + NADP(+) + H(+). In terms of biological role, involved in the regulation of the intracellular balance of NAD and NADP, and is a key enzyme in the biosynthesis of NADP. Catalyzes specifically the phosphorylation on 2'-hydroxyl of the adenosine moiety of NAD to yield NADP. This chain is NAD kinase, found in Pseudomonas fluorescens (strain SBW25).